A 373-amino-acid polypeptide reads, in one-letter code: 4-hydroxy-3-methylbut-2-en-1-yl diphosphate synthase (flavodoxin) (373 aa).

[4Fe-4S] cluster contacts are provided by Cys270, Cys273, Cys305, and Glu312.

It belongs to the IspG family. [4Fe-4S] cluster is required as a cofactor.

The enzyme catalyses (2E)-4-hydroxy-3-methylbut-2-enyl diphosphate + oxidized [flavodoxin] + H2O + 2 H(+) = 2-C-methyl-D-erythritol 2,4-cyclic diphosphate + reduced [flavodoxin]. It functions in the pathway isoprenoid biosynthesis; isopentenyl diphosphate biosynthesis via DXP pathway; isopentenyl diphosphate from 1-deoxy-D-xylulose 5-phosphate: step 5/6. Converts 2C-methyl-D-erythritol 2,4-cyclodiphosphate (ME-2,4cPP) into 1-hydroxy-2-methyl-2-(E)-butenyl 4-diphosphate. This is 4-hydroxy-3-methylbut-2-en-1-yl diphosphate synthase (flavodoxin) from Photobacterium profundum (strain SS9).